Consider the following 773-residue polypeptide: Pentatricopeptide repeat-containing protein At1g76280 (773 aa).

11 PPR repeats span residues 130 to 165 (DSRSLLFIVKSLCNGGHLDKASEFIHAVREDDRISP), 166 to 200 (LLPIYNFFLGACARTRSVYHASKCLELMDQRRVGK), 201 to 231 (NGITYVALLKLAVFQRNLSTVNDIWKHYVNH), 235 to 269 (DILSLRRFIWSFTRLGDLKSAYELLQHMVYLALRG), 332 to 369 (LRWSFNDVIHACGQSKNSELAEQLMLQLKVMQQQNLKP), 370 to 400 (YDSTLATVAAYCSKALQVDLAEHLLDQISEC), 402 to 436 (YSYPFNNLLAAYDSLDQPERAVRVLARMKELKLRP), 524 to 558 (GTPTYNIVLHSLLEANETDMVINIFKRMKSCGCPA), 559 to 593 (DVATYNIMIDCCSLIHSYKSACALVSMMIRDGFSP), 594 to 628 (KAVTFTALMKILLNDANFEEALNLLDQAALEEIHL), and 629 to 663 (DVLSYNTILRKAFEKGMIDVIEYIVEQMHREKVNP).

The protein belongs to the PPR family. P subfamily.

This Arabidopsis thaliana (Mouse-ear cress) protein is Pentatricopeptide repeat-containing protein At1g76280.